We begin with the raw amino-acid sequence, 317 residues long: Acetyl-coenzyme A carboxylase carboxyl transferase subunit alpha (317 aa).

Positions 37-292 constitute a CoA carboxyltransferase C-terminal domain; the sequence is RLEKKAEKLR…RICLKKHLDD (256 aa).

The protein belongs to the AccA family. Acetyl-CoA carboxylase is a heterohexamer composed of biotin carboxyl carrier protein (AccB), biotin carboxylase (AccC) and two subunits each of ACCase subunit alpha (AccA) and ACCase subunit beta (AccD).

It localises to the cytoplasm. The enzyme catalyses N(6)-carboxybiotinyl-L-lysyl-[protein] + acetyl-CoA = N(6)-biotinyl-L-lysyl-[protein] + malonyl-CoA. It participates in lipid metabolism; malonyl-CoA biosynthesis; malonyl-CoA from acetyl-CoA: step 1/1. Its function is as follows. Component of the acetyl coenzyme A carboxylase (ACC) complex. First, biotin carboxylase catalyzes the carboxylation of biotin on its carrier protein (BCCP) and then the CO(2) group is transferred by the carboxyltransferase to acetyl-CoA to form malonyl-CoA. In Syntrophotalea carbinolica (strain DSM 2380 / NBRC 103641 / GraBd1) (Pelobacter carbinolicus), this protein is Acetyl-coenzyme A carboxylase carboxyl transferase subunit alpha.